A 272-amino-acid polypeptide reads, in one-letter code: Formamidopyrimidine-DNA glycosylase (272 aa).

P2 acts as the Schiff-base intermediate with DNA in catalysis. The active-site Proton donor is E3. The active-site Proton donor; for beta-elimination activity is K58. 3 residues coordinate DNA: H93, R112, and R153. The FPG-type zinc finger occupies 238–272; it reads HVYGKSGQHCPKCGNILEDLKISNRGTVYCPHCQR. The active-site Proton donor; for delta-elimination activity is the R262.

The protein belongs to the FPG family. Monomer. The cofactor is Zn(2+).

It catalyses the reaction Hydrolysis of DNA containing ring-opened 7-methylguanine residues, releasing 2,6-diamino-4-hydroxy-5-(N-methyl)formamidopyrimidine.. It carries out the reaction 2'-deoxyribonucleotide-(2'-deoxyribose 5'-phosphate)-2'-deoxyribonucleotide-DNA = a 3'-end 2'-deoxyribonucleotide-(2,3-dehydro-2,3-deoxyribose 5'-phosphate)-DNA + a 5'-end 5'-phospho-2'-deoxyribonucleoside-DNA + H(+). In terms of biological role, involved in base excision repair of DNA damaged by oxidation or by mutagenic agents. Acts as a DNA glycosylase that recognizes and removes damaged bases. Has a preference for oxidized purines, such as 7,8-dihydro-8-oxoguanine (8-oxoG). Has AP (apurinic/apyrimidinic) lyase activity and introduces nicks in the DNA strand. Cleaves the DNA backbone by beta-delta elimination to generate a single-strand break at the site of the removed base with both 3'- and 5'-phosphates. The polypeptide is Formamidopyrimidine-DNA glycosylase (Dichelobacter nodosus (strain VCS1703A)).